Reading from the N-terminus, the 837-residue chain is Protein translocase subunit SecA (837 aa).

ATP contacts are provided by residues Q83, 101–105 (GEGKT), and D494.

It belongs to the SecA family. As to quaternary structure, monomer and homodimer. Part of the essential Sec protein translocation apparatus which comprises SecA, SecYEG and auxiliary proteins SecDF. Other proteins may also be involved.

It is found in the cell membrane. It localises to the cytoplasm. The enzyme catalyses ATP + H2O + cellular proteinSide 1 = ADP + phosphate + cellular proteinSide 2.. Part of the Sec protein translocase complex. Interacts with the SecYEG preprotein conducting channel. Has a central role in coupling the hydrolysis of ATP to the transfer of proteins into and across the cell membrane, serving as an ATP-driven molecular motor driving the stepwise translocation of polypeptide chains across the membrane. In Ureaplasma parvum serovar 3 (strain ATCC 27815 / 27 / NCTC 11736), this protein is Protein translocase subunit SecA.